The primary structure comprises 1186 residues: MYND-type zinc finger-containing chromatin reader ZMYND8 (1186 aa).

The span at 1–12 (MDISTRSKDPGS) shows a compositional bias: basic and acidic residues. Residues 1-57 (MDISTRSKDPGSAERTAQKRKFPSPPHSSNGHSPQDTSTSPIKKKKKPGLLNSNNKE) form a disordered region. The segment at 1–850 (MDISTRSKDP…QQQQQQQNQQ (850 aa)) is required for interaction with CCNT1. A Glycyl lysine isopeptide (Lys-Gly) (interchain with G-Cter in SUMO2) cross-link involves residue serine 12. At serine 24 the chain carries Phosphoserine. Glycyl lysine isopeptide (Lys-Gly) (interchain with G-Cter in SUMO2) cross-links involve residues lysine 56 and lysine 70. The segment at 75–268 (TDPVDVVPQD…YLAACQKRDN (194 aa)) is interaction with histone H3K4me0. Residues 75–406 (TDPVDVVPQD…VKLNFDMTAS (332 aa)) form an interaction with histone H3K14ac region. The segment at 88–133 (DFYCWVCHREGQVLCCELCPRVYHAKCLRLTSEPEGDWFCPECEKI) adopts a PHD-type zinc-finger fold. The interval 88-327 (DFYCWVCHRE…INNCYLMSKE (240 aa)) is required for interaction with histone H3 and histone H4. The Zn(2+) site is built by cysteine 91, cysteine 94, cysteine 103, cysteine 106, histidine 111, cysteine 114, cysteine 127, and cysteine 130. Residues 145 to 252 (AMTMLTIEQL…KICEHEMNEI (108 aa)) enclose the Bromo domain. Residues cysteine 255, cysteine 258, and cysteine 274 each contribute to the Zn(2+) site. The PWWP domain occupies 277–327 (PHPLVWAKLKGFPFWPAKALRDKDGQVDARFFGQHDRAWVPINNCYLMSKE). A Glycyl lysine isopeptide (Lys-Gly) (interchain with G-Cter in SUMO2) cross-link involves residue lysine 390. Phosphothreonine is present on threonine 404. Serine 406 bears the Phosphoserine mark. The disordered stretch occupies residues 412 to 512 (SKPVLSGGTG…TTKTDKTSTT (101 aa)). The residue at position 413 (lysine 413) is an N6-acetyllysine; alternate. Lysine 413 participates in a covalent cross-link: Glycyl lysine isopeptide (Lys-Gly) (interchain with G-Cter in SUMO2); alternate. Phosphoserine occurs at positions 417, 425, and 432. The segment covering 433–442 (PMSTNSSVHT) has biased composition (polar residues). Residue serine 444 is modified to Phosphoserine. Residue lysine 453 forms a Glycyl lysine isopeptide (Lys-Gly) (interchain with G-Cter in SUMO2) linkage. Phosphoserine occurs at positions 460, 462, 465, 486, 490, and 495. The segment covering 472 to 489 (STASPASTKTGQAGSLSG) has biased composition (polar residues). Lysine 505 is covalently cross-linked (Glycyl lysine isopeptide (Lys-Gly) (interchain with G-Cter in SUMO2)). Serine 514 and serine 523 each carry phosphoserine. Residue lysine 530 forms a Glycyl lysine isopeptide (Lys-Gly) (interchain with G-Cter in SUMO2) linkage. Threonine 541 carries the post-translational modification Phosphothreonine. Position 547 is a phosphoserine (serine 547). Lysine 549 is covalently cross-linked (Glycyl lysine isopeptide (Lys-Gly) (interchain with G-Cter in SUMO2)). Position 563 is a phosphothreonine (threonine 563). A disordered region spans residues 582-884 (TAVEHSDSED…ITQSPSTSTI (303 aa)). 2 stretches are compositionally biased toward basic and acidic residues: residues 585–597 (EHSDSEDSEKSDS) and 606–631 (DEQKSKNEPEDTEDKEGCQMDKEPSA). Glycyl lysine isopeptide (Lys-Gly) (interchain with G-Cter in SUMO2) cross-links involve residues lysine 611 and lysine 645. Serine 652 and serine 655 each carry phosphoserine. Residues 656-696 (EKADPGAVKDKASPEPEKDFSEKAKPSPHPIKDKLKGKDET) show a composition bias toward basic and acidic residues. A Glycyl lysine isopeptide (Lys-Gly) (interchain with G-Cter in SUMO2) cross-link involves residue lysine 657. Residues serine 668, serine 682, serine 707, serine 709, and serine 737 each carry the phosphoserine modification. Basic and acidic residues predominate over residues 718-738 (GEDHSGREGRKNKKEPKEPSP). Threonine 746 bears the Phosphothreonine mark. Serine 754 and serine 756 each carry phosphoserine. Over residues 766-799 (SSAQTSAAGATATTSTSSTVTVTAPAPAATGSPV) the composition is skewed to low complexity. The span at 818–832 (VWNSSSKFQTSSQKW) shows a compositional bias: polar residues. Residues 835–857 (QKMQRQQQQQQQQNQQQQPQSSQ) are compositionally biased toward low complexity. The segment covering 873–884 (KEITQSPSTSTI) has biased composition (polar residues). Residues 875–1047 (ITQSPSTSTI…YCCWNTSYCD (173 aa)) form a required for homodimerization region. The Zn(2+) site is built by cysteine 1028, cysteine 1031, cysteine 1039, cysteine 1040, cysteine 1046, cysteine 1050, histidine 1058, and cysteine 1062. The segment at 1028 to 1062 (CANCKKEAIFYCCWNTSYCDYPCQQAHWPEHMKSC) adopts an MYND-type zinc-finger fold. A required for recruitment to DNA damage sites and for interaction with the NuRD complex, CHD4, HDAC1, HDAC2 and KDM1A region spans residues 1028 to 1062 (CANCKKEAIFYCCWNTSYCDYPCQQAHWPEHMKSC). The interval 1071–1186 (QEADAEVNTE…KESRLDTFWD (116 aa)) is disordered. Positions 1085–1103 (SSQGSSSSTQSAPSETASA) are enriched in low complexity. The segment covering 1104–1116 (SKEKETSAEKSKE) has biased composition (basic and acidic residues). Residue lysine 1115 forms a Glycyl lysine isopeptide (Lys-Gly) (interchain with G-Cter in SUMO2) linkage. Serine 1119 carries the phosphoserine modification. Residues 1121–1140 (LDLSGSRETPSSILLGSNQG) show a composition bias toward polar residues. Phosphoserine is present on serine 1141. Residues 1147–1186 (NKSSWSSSDEKRGSTRSDHNTSTSTKSLLPKESRLDTFWD) are interaction with PRKCB1. 2 stretches are compositionally biased toward basic and acidic residues: residues 1154 to 1165 (SDEKRGSTRSDH) and 1175 to 1186 (LPKESRLDTFWD).

In terms of assembly, monomer and homodimer. Interacts with NuRD subcomplexes containing GATAD2A. Interacts with the histone deacetylase NuRD complex subunit CHD4; the interaction is direct, appears to occur with monomeric ZMYND8, and is increased following DNA damage. Interacts (via N-terminus) with the P-TEFb complex subunit CCNT1 (via central region); the interaction is direct and the association appears to occur between homodimeric ZMYND8 and the activated form of the P-TEFb complex. Interacts (via N-terminus) with DBN1 (via ADF-H domain); the interaction leads to sequestering of ZMYND8 in the cytoplasm. Interacts with the P-TEFb complex subunit CDK9; the association appears to occur between homodimeric ZMYND8 and the activated form of the P-TEFb complex. Interacts with EZH2; the interaction is dependent on the presence of chromatin. Interacts (via MYND domain) with the NuRD complex subunit GATAD2A. Interacts with histone H3 (via N-terminus) that is both methylated at 'Lys-4' (H3K4me1) and acetylated at 'Lys-14' (H3K14ac), with histone H3 (via N-terminus) unmodified at 'Lys-4' (H3K4me0) and acetylated at 'Lys-14' (H3K14ac), and with histone H3 (via N-terminus) di-methylated at 'Lys-36' (H3K36me2). Interacts (via Bromo domain) with histone H4 acetylated at 'Lys-16' (H4K16ac). Interacts with HDAC1. Interacts with HDAC2. Interacts with KDM1A. Interacts with KDM5C. Interacts with KDM5D. Interacts in vitro with PRKCB. Interacts with RNA polymerase II subunit POLR2A phosphorylated at 'Ser-5'. Interacts with ZNF592. Interacts with ZNF687. Does not interact with GATAD2B. Expressed in neurons (at protein level). Absent in astrocytes (at protein level). Expressed in all tissues examined with highest expression in brain, lung, pancreas, and placenta. Expressed in cutaneous T-cell lymphomas (CTCL).

The protein resides in the nucleus. It is found in the chromosome. The protein localises to the cytoplasm. Functionally, chromatin reader that recognizes dual histone modifications such as histone H3.1 dimethylated at 'Lys-36' and histone H4 acetylated at 'Lys-16' (H3.1K36me2-H4K16ac) and histone H3 methylated at 'Lys-4' and histone H4 acetylated at 'Lys-14' (H3K4me1-H3K14ac). May act as a transcriptional corepressor for KDM5D by recognizing the dual histone signature H3K4me1-H3K14ac. May also act as a transcriptional corepressor for KDM5C and EZH2. Recognizes acetylated histone H4 and recruits the NuRD chromatin remodeling complex to damaged chromatin for transcriptional repression and double-strand break repair by homologous recombination. Also activates transcription elongation by RNA polymerase II through recruiting the P-TEFb complex to target promoters. Localizes to H3.1K36me2-H4K16ac marks at all-trans-retinoic acid (ATRA)-responsive genes and positively regulates their expression. Promotes neuronal differentiation by associating with regulatory regions within the MAPT gene, to enhance transcription of a protein-coding MAPT isoform and suppress the non-coding MAPT213 isoform. Suppresses breast cancer, and prostate cancer cell invasion and metastasis. The polypeptide is MYND-type zinc finger-containing chromatin reader ZMYND8 (ZMYND8) (Homo sapiens (Human)).